Here is a 460-residue protein sequence, read N- to C-terminus: Bifunctional protein GlmU (460 aa).

The pyrophosphorylase stretch occupies residues 1-229; the sequence is MSNYAIILAA…FEESLGVNDR (229 aa). UDP-N-acetyl-alpha-D-glucosamine contacts are provided by residues 8 to 11, Lys-22, Gln-72, and 77 to 78; these read LAAG and GT. Asp-102 provides a ligand contact to Mg(2+). 4 residues coordinate UDP-N-acetyl-alpha-D-glucosamine: Gly-139, Glu-154, Asn-169, and Asn-227. Asn-227 is a Mg(2+) binding site. The segment at 230–250 is linker; that stretch reads VALATAEDVMRRRINKTHMIN. The segment at 251 to 460 is N-acetyltransferase; it reads GVTFQNPNAT…KKPHHPSQQK (210 aa). UDP-N-acetyl-alpha-D-glucosamine-binding residues include Arg-332 and Lys-350. The active-site Proton acceptor is His-362. UDP-N-acetyl-alpha-D-glucosamine is bound by residues Tyr-365 and Asn-376. Residues Ala-379, 385-386, Ser-404, Ala-422, and Arg-439 each bind acetyl-CoA; that span reads NY.

It in the N-terminal section; belongs to the N-acetylglucosamine-1-phosphate uridyltransferase family. The protein in the C-terminal section; belongs to the transferase hexapeptide repeat family. In terms of assembly, homotrimer. Mg(2+) is required as a cofactor.

The protein localises to the cytoplasm. It catalyses the reaction alpha-D-glucosamine 1-phosphate + acetyl-CoA = N-acetyl-alpha-D-glucosamine 1-phosphate + CoA + H(+). The catalysed reaction is N-acetyl-alpha-D-glucosamine 1-phosphate + UTP + H(+) = UDP-N-acetyl-alpha-D-glucosamine + diphosphate. It participates in nucleotide-sugar biosynthesis; UDP-N-acetyl-alpha-D-glucosamine biosynthesis; N-acetyl-alpha-D-glucosamine 1-phosphate from alpha-D-glucosamine 6-phosphate (route II): step 2/2. The protein operates within nucleotide-sugar biosynthesis; UDP-N-acetyl-alpha-D-glucosamine biosynthesis; UDP-N-acetyl-alpha-D-glucosamine from N-acetyl-alpha-D-glucosamine 1-phosphate: step 1/1. Its pathway is bacterial outer membrane biogenesis; LPS lipid A biosynthesis. Functionally, catalyzes the last two sequential reactions in the de novo biosynthetic pathway for UDP-N-acetylglucosamine (UDP-GlcNAc). The C-terminal domain catalyzes the transfer of acetyl group from acetyl coenzyme A to glucosamine-1-phosphate (GlcN-1-P) to produce N-acetylglucosamine-1-phosphate (GlcNAc-1-P), which is converted into UDP-GlcNAc by the transfer of uridine 5-monophosphate (from uridine 5-triphosphate), a reaction catalyzed by the N-terminal domain. The polypeptide is Bifunctional protein GlmU (Streptococcus thermophilus (strain ATCC BAA-491 / LMD-9)).